Reading from the N-terminus, the 324-residue chain is Hydroxyacylglutathione hydrolase 2, mitochondrial (324 aa).

Residues 1–64 (MQTISKASSA…KSIRVSKFCS (64 aa)) constitute a mitochondrion transit peptide. Zn(2+)-binding residues include histidine 124 and histidine 126. Aspartate 128 and histidine 129 together coordinate Fe cation. The Zn(2+) site is built by histidine 182 and aspartate 201. 2 residues coordinate Fe cation: aspartate 201 and histidine 239.

The protein belongs to the metallo-beta-lactamase superfamily. Glyoxalase II family. Monomer. It depends on Fe(3+) as a cofactor. Requires Fe(2+) as cofactor. The cofactor is Zn(2+).

Its subcellular location is the mitochondrion. The enzyme catalyses an S-(2-hydroxyacyl)glutathione + H2O = a 2-hydroxy carboxylate + glutathione + H(+). The protein operates within secondary metabolite metabolism; methylglyoxal degradation; (R)-lactate from methylglyoxal: step 2/2. Thiolesterase that catalyzes the hydrolysis of S-D-lactoyl-glutathione to form glutathione and D-lactic acid. This is Hydroxyacylglutathione hydrolase 2, mitochondrial from Arabidopsis thaliana (Mouse-ear cress).